The sequence spans 405 residues: L-carnitine CoA-transferase (405 aa).

CoA contacts are provided by K97 and R104. The Nucleophile role is filled by D169.

This sequence belongs to the CoA-transferase III family. CaiB subfamily. As to quaternary structure, homodimer.

The protein resides in the cytoplasm. It carries out the reaction crotonobetainyl-CoA + (R)-carnitine = crotonobetaine + (R)-carnitinyl-CoA. The catalysed reaction is 4-(trimethylamino)butanoyl-CoA + (R)-carnitine = (R)-carnitinyl-CoA + 4-(trimethylamino)butanoate. Its pathway is amine and polyamine metabolism; carnitine metabolism. Functionally, catalyzes the reversible transfer of the CoA moiety from gamma-butyrobetainyl-CoA to L-carnitine to generate L-carnitinyl-CoA and gamma-butyrobetaine. Is also able to catalyze the reversible transfer of the CoA moiety from gamma-butyrobetainyl-CoA or L-carnitinyl-CoA to crotonobetaine to generate crotonobetainyl-CoA. This is L-carnitine CoA-transferase from Escherichia coli O139:H28 (strain E24377A / ETEC).